We begin with the raw amino-acid sequence, 192 residues long: UPF0301 protein BceJ2315_30870 (192 aa).

The protein belongs to the UPF0301 (AlgH) family.

The protein is UPF0301 protein BceJ2315_30870 of Burkholderia cenocepacia (strain ATCC BAA-245 / DSM 16553 / LMG 16656 / NCTC 13227 / J2315 / CF5610) (Burkholderia cepacia (strain J2315)).